The sequence spans 188 residues: Transcription factor E (188 aa).

Residues Asp9 to Leu98 enclose the HTH TFE/IIEalpha-type domain.

It belongs to the TFE family. Monomer. Interaction with RNA polymerase subunits RpoF and RpoE is necessary for Tfe stimulatory transcription activity. Able to interact with Tbp and RNA polymerase in the absence of DNA promoter. Interacts both with the preinitiation and elongation complexes.

Its function is as follows. Transcription factor that plays a role in the activation of archaeal genes transcribed by RNA polymerase. Facilitates transcription initiation by enhancing TATA-box recognition by TATA-box-binding protein (Tbp), and transcription factor B (Tfb) and RNA polymerase recruitment. Not absolutely required for transcription in vitro, but particularly important in cases where Tbp or Tfb function is not optimal. It dynamically alters the nucleic acid-binding properties of RNA polymerases by stabilizing the initiation complex and destabilizing elongation complexes. Seems to translocate with the RNA polymerase following initiation and acts by binding to the non template strand of the transcription bubble in elongation complexes. The polypeptide is Transcription factor E (Methanopyrus kandleri (strain AV19 / DSM 6324 / JCM 9639 / NBRC 100938)).